The sequence spans 399 residues: uncharacterized protein (399 aa).

The protein belongs to the AdoMet synthetase 2 family.

This is an uncharacterized protein from Streptococcus pyogenes serotype M1.